The sequence spans 415 residues: BTB/POZ and MATH domain-containing protein 6 (415 aa).

The segment at M1 to T33 is disordered. One can recognise an MATH domain in the interval N35–V169. Residues S205–V271 enclose the BTB domain. A disordered region spans residues S385–T415. Polar residues predominate over residues S392 to T405.

It belongs to the Tdpoz family. As to quaternary structure, heterodimer with BPM1. Interacts with RAP2-4. Interacts with CUL3A. Binds to MYB56 at the promoter of FLOWERING LOCUS T (FT). As to expression, ubiquitous.

The protein resides in the nucleus. It is found in the cytoplasm. Its pathway is protein modification; protein ubiquitination. May act as a substrate-specific adapter of an E3 ubiquitin-protein ligase complex (CUL3-RBX1-BTB) which mediates the ubiquitination and subsequent proteasomal degradation of target proteins. This is BTB/POZ and MATH domain-containing protein 6 (BPM6) from Arabidopsis thaliana (Mouse-ear cress).